Consider the following 175-residue polypeptide: Large ribosomal subunit protein uL10 (175 aa).

Belongs to the universal ribosomal protein uL10 family. As to quaternary structure, part of the ribosomal stalk of the 50S ribosomal subunit. The N-terminus interacts with L11 and the large rRNA to form the base of the stalk. The C-terminus forms an elongated spine to which L12 dimers bind in a sequential fashion forming a multimeric L10(L12)X complex.

Forms part of the ribosomal stalk, playing a central role in the interaction of the ribosome with GTP-bound translation factors. The sequence is that of Large ribosomal subunit protein uL10 (rplJ) from Xylella fastidiosa (strain 9a5c).